The following is a 208-amino-acid chain: dTTP/UTP pyrophosphatase (208 aa).

Aspartate 78 acts as the Proton acceptor in catalysis.

The protein belongs to the Maf family. YhdE subfamily. The cofactor is a divalent metal cation.

It is found in the cytoplasm. The enzyme catalyses dTTP + H2O = dTMP + diphosphate + H(+). It carries out the reaction UTP + H2O = UMP + diphosphate + H(+). Nucleoside triphosphate pyrophosphatase that hydrolyzes dTTP and UTP. May have a dual role in cell division arrest and in preventing the incorporation of modified nucleotides into cellular nucleic acids. This is dTTP/UTP pyrophosphatase from Maricaulis maris (strain MCS10) (Caulobacter maris).